Reading from the N-terminus, the 315-residue chain is Annexin Gh1 (315 aa).

Annexin repeat units lie at residues 10–81 (PSVS…LWAL), 82–153 (DPAE…PLVS), 165–236 (TLAK…STVK), and 240–311 (YPEK…VLAG). Positions 23, 25, 27, and 67 each coordinate Ca(2+). Ca(2+)-binding residues include isoleucine 253, arginine 255, glycine 257, valine 295, aspartate 297, threonine 298, and glutamate 303.

This sequence belongs to the annexin family. As to quaternary structure, monomer. Trimer. Oligomerization is calcium-independent. Disassembly of the oligomers seems to be required for calcium-binding.

The protein localises to the membrane. Functionally, binds to phospholipid vesicles in a calcium-dependent manner in vitro. Prefers phosphatidyl-serine containing membranes. May have a role in the membrane cytoskeleton scaffolding or exocytotic processes. May be involved in oxidative stress response. This Gossypium hirsutum (Upland cotton) protein is Annexin Gh1.